The primary structure comprises 340 residues: Phenylalanine--tRNA ligase alpha subunit (340 aa).

Glutamate 255 is a binding site for Mg(2+).

The protein belongs to the class-II aminoacyl-tRNA synthetase family. Phe-tRNA synthetase alpha subunit type 1 subfamily. In terms of assembly, tetramer of two alpha and two beta subunits. It depends on Mg(2+) as a cofactor.

Its subcellular location is the cytoplasm. It carries out the reaction tRNA(Phe) + L-phenylalanine + ATP = L-phenylalanyl-tRNA(Phe) + AMP + diphosphate + H(+). This is Phenylalanine--tRNA ligase alpha subunit from Desulfitobacterium hafniense (strain DSM 10664 / DCB-2).